We begin with the raw amino-acid sequence, 296 residues long: Phosphatidylglycerol--prolipoprotein diacylglyceryl transferase (296 aa).

Transmembrane regions (helical) follow at residues 17–37 (LAVR…IVVG), 59–79 (MMFY…VLFY), and 97–117 (GGMS…LFAW). Arg142 serves as a coordination point for a 1,2-diacyl-sn-glycero-3-phospho-(1'-sn-glycerol). The next 2 membrane-spanning stretches (helical) occupy residues 230-250 (MGAI…TVEF) and 265-285 (LSMG…MMIW).

The protein belongs to the Lgt family.

The protein localises to the cell inner membrane. The enzyme catalyses L-cysteinyl-[prolipoprotein] + a 1,2-diacyl-sn-glycero-3-phospho-(1'-sn-glycerol) = an S-1,2-diacyl-sn-glyceryl-L-cysteinyl-[prolipoprotein] + sn-glycerol 1-phosphate + H(+). It participates in protein modification; lipoprotein biosynthesis (diacylglyceryl transfer). Functionally, catalyzes the transfer of the diacylglyceryl group from phosphatidylglycerol to the sulfhydryl group of the N-terminal cysteine of a prolipoprotein, the first step in the formation of mature lipoproteins. This is Phosphatidylglycerol--prolipoprotein diacylglyceryl transferase from Burkholderia pseudomallei (strain 668).